Here is a 564-residue protein sequence, read N- to C-terminus: MSYPADDYESEAAYDPYAYPGDYDMHTGDPKQDLAYERQYEQQTYQVIPEVIKNFIQYFHKTVSDLIDQKVYELQASRVSSDVIDQKVYEIQDIYENSWTKLTERFFKNTPWPEAETIAPQVGNDAVFLILYKELYYRHIYAKVSGGPSLEQRFESYYNYCNLFNYILNADGPAPLELPNQWLWDIIDEFIYQFQSFSQYRCKTAKKSEEEIDFLRSNPKIWNVHSVLNVLHSLVDKSNINRQLEVYTSGGDPESVAGEYGRHSLYKMLGYFSLVGLLRLHSLLGDYYQAIKVLENIELNKKSMYSRVPECQVTTYYYVGFAYLMMRRYQDAIRVFANILLYIQRTKSMFQRTTYKYEMINKQNEQMHALLAIALTMYPMRIDESIHLQLREKYGDKMLRMQKGDPQVYEELFSYSCPKFLSPVVPNYDNVHPNYHKEPFLQQLKVFSDEVQQQAQLSTIRSFLKLYTTMPVAKLAGFLDLTEQEFRIQLLVFKHKMKNLVWTSGISALDGEFQSASEVDFYIDKDMIHIADTKVARRYGDFFIRQIHKFEELNRTLKKMGQRP.

N-acetylserine is present on Ser-2. Residues 331-537 enclose the PCI domain; it reads DAIRVFANIL…IHIADTKVAR (207 aa). N6-acetyllysine is present on residues Lys-465 and Lys-549.

The protein belongs to the eIF-3 subunit L family. Component of the eukaryotic translation initiation factor 3 (eIF-3) complex, which is composed of 13 subunits: EIF3A, EIF3B, EIF3C, EIF3D, EIF3E, EIF3F, EIF3G, EIF3H, EIF3I, EIF3J, EIF3K, EIF3L and EIF3M. The eIF-3 complex appears to include 3 stable modules: module A is composed of EIF3A, EIF3B, EIF3G and EIF3I; module B is composed of EIF3F, EIF3H, and EIF3M; and module C is composed of EIF3C, EIF3D, EIF3E, EIF3K and EIF3L. EIF3C of module C binds EIF3B of module A and EIF3H of module B, thereby linking the three modules. EIF3J is a labile subunit that binds to the eIF-3 complex via EIF3B. The eIF-3 complex interacts with RPS6KB1 under conditions of nutrient depletion. Mitogenic stimulation leads to binding and activation of a complex composed of MTOR and RPTOR, leading to phosphorylation and release of RPS6KB1 and binding of EIF4B to eIF-3. Interacts with RRN3.

Its subcellular location is the cytoplasm. Functionally, component of the eukaryotic translation initiation factor 3 (eIF-3) complex, which is required for several steps in the initiation of protein synthesis. The eIF-3 complex associates with the 40S ribosome and facilitates the recruitment of eIF-1, eIF-1A, eIF-2:GTP:methionyl-tRNAi and eIF-5 to form the 43S pre-initiation complex (43S PIC). The eIF-3 complex stimulates mRNA recruitment to the 43S PIC and scanning of the mRNA for AUG recognition. The eIF-3 complex is also required for disassembly and recycling of post-termination ribosomal complexes and subsequently prevents premature joining of the 40S and 60S ribosomal subunits prior to initiation. The eIF-3 complex specifically targets and initiates translation of a subset of mRNAs involved in cell proliferation, including cell cycling, differentiation and apoptosis, and uses different modes of RNA stem-loop binding to exert either translational activation or repression. The sequence is that of Eukaryotic translation initiation factor 3 subunit L from Bos taurus (Bovine).